Consider the following 348-residue polypeptide: DnaJ homolog subfamily B member 5 (348 aa).

One can recognise a J domain in the interval D4–G68.

This Bos taurus (Bovine) protein is DnaJ homolog subfamily B member 5 (DNAJB5).